Consider the following 402-residue polypeptide: Succinylornithine transaminase (402 aa).

Lys252 carries the N6-(pyridoxal phosphate)lysine modification.

It belongs to the class-III pyridoxal-phosphate-dependent aminotransferase family. AstC subfamily. Pyridoxal 5'-phosphate serves as cofactor.

The catalysed reaction is N(2)-succinyl-L-ornithine + 2-oxoglutarate = N-succinyl-L-glutamate 5-semialdehyde + L-glutamate. It functions in the pathway amino-acid degradation; L-arginine degradation via AST pathway; L-glutamate and succinate from L-arginine: step 3/5. Catalyzes the transamination of N(2)-succinylornithine and alpha-ketoglutarate into N(2)-succinylglutamate semialdehyde and glutamate. Can also act as an acetylornithine aminotransferase. The sequence is that of Succinylornithine transaminase from Photorhabdus laumondii subsp. laumondii (strain DSM 15139 / CIP 105565 / TT01) (Photorhabdus luminescens subsp. laumondii).